Reading from the N-terminus, the 118-residue chain is UPF0102 protein RHA1_ro06551 (118 aa).

It belongs to the UPF0102 family.

The chain is UPF0102 protein RHA1_ro06551 from Rhodococcus jostii (strain RHA1).